Consider the following 450-residue polypeptide: Sulfide:quinone oxidoreductase, mitochondrial (450 aa).

FAD-binding positions include 53–54 (SG), Glu-75, Gln-83, and Val-118. Position 173 is an N6-acetyllysine (Lys-173). Residue Cys-201 is the Cysteine persulfide intermediate of the active site. A disulfide bridge connects residues Cys-201 and Cys-379. FAD is bound at residue Asp-336. Phosphoserine is present on Ser-343. 344–347 (KTAA) serves as a coordination point for FAD. Residue Cys-379 is the Cysteine persulfide intermediate of the active site.

The protein belongs to the SQRD family. The cofactor is FAD.

It localises to the mitochondrion. It carries out the reaction ubiquinone-10 + hydrogen sulfide + sulfite + 2 H(+) = ubiquinol-10 + thiosulfate. The catalysed reaction is a quinone + hydrogen sulfide + glutathione + H(+) = S-sulfanylglutathione + a quinol. The enzyme catalyses ubiquinone-10 + hydrogen sulfide + glutathione + H(+) = S-sulfanylglutathione + ubiquinol-10. Catalyzes the oxidation of hydrogen sulfide with the help of a quinone, such as ubiquinone-10, giving rise to thiosulfate and ultimately to sulfane (molecular sulfur) atoms. Requires an additional electron acceptor; can use sulfite, sulfide or cyanide (in vitro). It is believed the in vivo electron acceptor is glutathione. The chain is Sulfide:quinone oxidoreductase, mitochondrial from Homo sapiens (Human).